The primary structure comprises 456 residues: Crinkler effector protein 2 (456 aa).

Residues M1–P17 form the signal peptide. The tract at residues V18 to K54 is LQLFLAK domain. Residues Q55–I136 form a DWL domain region. The HVLVXXP motif motif lies at H137–P143. N338 is a glycosylation site (N-linked (GlcNAc...) asparagine).

The protein belongs to the Crinkler effector family.

It is found in the secreted. It localises to the host nucleus. Its function is as follows. Secreted effector that effector that induces cell death when expressed in host plants. Induces the expression of defense response genes in tomato. This is Crinkler effector protein 2 from Phytophthora infestans (Potato late blight agent).